Reading from the N-terminus, the 528-residue chain is Major facilitator superfamily multidrug transporter mdr3 (528 aa).

The segment at 1-37 (MLAMAASAEETNRQSNAGRRSVISPSEAPPEAEQSDV) is disordered. 7 helical membrane passes run 50 to 70 (FILILCSTQLFVQGAFGYILI), 91 to 111 (WHVGGYSLTVGTFILIAGKLG), 119 to 139 (ILVLGWAWFGVWSVIGGCSAF), 149 to 169 (ARALQGIGPALLLPNALAIAG), 180 to 200 (MIFSAFAVAAPLGCFTAGVVG), 211 to 231 (WVMWTYSIGCFIIAAVGLWVI), and 241 to 261 (AATLQFDYIGSVLGVAGLLLL). N-linked (GlcNAc...) asparagine glycosylation occurs at Asn262. The next 5 helical transmembrane spans lie at 272-292 (GWSTPYVYVLLIGGFLVLGLF), 340-360 (VITSGWLMAIACAAFLGGCIL), 375-395 (FWSFVIMAWGMDISFPASTTI), 410-430 (SLVNTVINYSIAIGLGIAGTV), and 448-468 (ALWSSVGLAALAFGIALVFAV).

It belongs to the major facilitator superfamily.

The protein resides in the cell membrane. Its function is as follows. Major facilitator superfamily transporter that confers resistance to azoles such as itraconazole. The protein is Major facilitator superfamily multidrug transporter mdr3 of Aspergillus fumigatus (strain ATCC MYA-4609 / CBS 101355 / FGSC A1100 / Af293) (Neosartorya fumigata).